An 86-amino-acid polypeptide reads, in one-letter code: Electron transfer flavoprotein regulatory factor 1 (86 aa).

It belongs to the complex I LYR family. In terms of assembly, homotetramer. Interacts with NDUFAB1. Interacts with ETFA. Interacts with ETFB.

Its subcellular location is the mitochondrion. Acts as a regulator of the electron transfer flavoprotein by promoting the removal of flavin from the ETF holoenzyme (composed of ETFA and ETFB). The protein is Electron transfer flavoprotein regulatory factor 1 of Mus musculus (Mouse).